Reading from the N-terminus, the 429-residue chain is Ribosomal RNA small subunit methyltransferase B (429 aa).

S-adenosyl-L-methionine is bound by residues 254-260 (CAAPGGK), D277, D303, and D322. Catalysis depends on C375, which acts as the Nucleophile.

This sequence belongs to the class I-like SAM-binding methyltransferase superfamily. RsmB/NOP family.

The protein resides in the cytoplasm. The catalysed reaction is cytidine(967) in 16S rRNA + S-adenosyl-L-methionine = 5-methylcytidine(967) in 16S rRNA + S-adenosyl-L-homocysteine + H(+). In terms of biological role, specifically methylates the cytosine at position 967 (m5C967) of 16S rRNA. The polypeptide is Ribosomal RNA small subunit methyltransferase B (Yersinia pestis bv. Antiqua (strain Angola)).